We begin with the raw amino-acid sequence, 680 residues long: DNA-directed RNA polymerase subunit beta' (680 aa).

4 residues coordinate Zn(2+): C69, C71, C87, and C90. Residues D489, D491, and D493 each contribute to the Mg(2+) site.

It belongs to the RNA polymerase beta' chain family. RpoC1 subfamily. As to quaternary structure, in plastids the minimal PEP RNA polymerase catalytic core is composed of four subunits: alpha, beta, beta', and beta''. When a (nuclear-encoded) sigma factor is associated with the core the holoenzyme is formed, which can initiate transcription. The cofactor is Mg(2+). Zn(2+) is required as a cofactor.

It localises to the plastid. It is found in the chloroplast. The enzyme catalyses RNA(n) + a ribonucleoside 5'-triphosphate = RNA(n+1) + diphosphate. Its function is as follows. DNA-dependent RNA polymerase catalyzes the transcription of DNA into RNA using the four ribonucleoside triphosphates as substrates. The protein is DNA-directed RNA polymerase subunit beta' of Arabidopsis thaliana (Mouse-ear cress).